The sequence spans 549 residues: Beta-mannosyltransferase 3 (549 aa).

Residues 1–37 (MFESDLSFYSALLILCCPISIVFFKKFPIKGYTGANK) lie on the Cytoplasmic side of the membrane. The chain crosses the membrane as a helical span at residues 38 to 58 (VSLFLQCLIAILNLNILYSFI). Topologically, residues 59-549 (NSLTITLGHD…DTMGWDKLSR (491 aa)) are extracellular.

The protein belongs to the BMT family.

The protein localises to the membrane. Functionally, beta-mannosyltransferase involved in cell wall biosynthesis. Required for addition of the second beta-mannose residue to acid-stable fraction of cell wall phosphopeptidomannan, and in elongation of beta-mannose chains on the phosphopeptidomannan acid-labile fraction. The protein is Beta-mannosyltransferase 3 (BMT3) of Candida albicans (strain SC5314 / ATCC MYA-2876) (Yeast).